The sequence spans 263 residues: uncharacterized protein (263 aa).

Residues 12-247 (LETQNLAIGY…ENLAKIYRTS (236 aa)) enclose the ABC transporter domain. 44–51 (GANGAGKS) provides a ligand contact to ATP.

Belongs to the ABC transporter superfamily.

This is an uncharacterized protein from Haemophilus influenzae (strain ATCC 51907 / DSM 11121 / KW20 / Rd).